A 626-amino-acid polypeptide reads, in one-letter code: Glyco-Gag protein (626 aa).

Over 1 to 67 (LGDVPGTSGA…VWSRSRAARP (67 aa)) the chain is Cytoplasmic. Residues 68–86 (VCCSIVLCCFCLTVFLYLS) form a helical membrane-spanning segment. Topologically, residues 87–626 (ENMGQTATTP…PQASLLTLDD (540 aa)) are extracellular. Residue N113 is glycosylated (N-linked (GlcNAc...) asparagine; by host). Pro residues-rich tracts occupy residues 199–212 (PSAP…PLST) and 249–261 (DPPP…PPSP). The tract at residues 199-306 (PSAPSLPPEP…STTSQAFPLR (108 aa)) is disordered. A glycan (N-linked (GlcNAc...) asparagine; by host) is linked at N480. 2 stretches are compositionally biased toward basic and acidic residues: residues 522–554 (RETP…EKER) and 574–607 (RQDR…DCPK). The interval 522–626 (RETPEEREER…PQASLLTLDD (105 aa)) is disordered. The segment at 590-607 (DQCAYCKEKGHWARDCPK) adopts a CCHC-type zinc-finger fold.

In terms of processing, glycosylated by host. Post-translationally, cleaved by host near the middle of the molecule, releasing the c-terminal half containing capsid and nucleoprotein domains op GAG.

The protein resides in the host cell membrane. Its function is as follows. Plays a role in viral particle release. Presumably acts by facilitating the fission of the virion bud at the cell surface. May prevent the antiviral activity of murine APOBEC3. The sequence is that of Glyco-Gag protein from Mus musculus (Mouse).